A 424-amino-acid chain; its full sequence is 3-ketoacyl-CoA thiolase B, peroxisomal (424 aa).

The N-terminal 26 residues, 1 to 26 (MHRLQVVLGHLAGRSESSSALQAAPC), are a transit peptide targeting the peroxisome. The interval 1–26 (MHRLQVVLGHLAGRSESSSALQAAPC) is PTS2-type peroxisomal targeting signal. C123 functions as the Acyl-thioester intermediate in the catalytic mechanism. 2 positions are modified to N6-acetyllysine: K173 and K234. CoA contacts are provided by R249, T252, and S276. The active-site Proton donor/acceptor is the C408.

Belongs to the thiolase-like superfamily. Thiolase family. As to quaternary structure, homodimer. Interacts (via PTS2-type peroxisomal targeting signal region) with PEX7; leading to its translocation into peroxisomes.

It localises to the peroxisome. The catalysed reaction is an acyl-CoA + acetyl-CoA = a 3-oxoacyl-CoA + CoA. The enzyme catalyses 2 acetyl-CoA = acetoacetyl-CoA + CoA. It catalyses the reaction hexanoyl-CoA + acetyl-CoA = 3-oxooctanoyl-CoA + CoA. It carries out the reaction tetradecanoyl-CoA + acetyl-CoA = 3-oxohexadecanoyl-CoA + CoA. The catalysed reaction is 3-oxohexadecanedioyl-CoA + CoA = tetradecanedioyl-CoA + acetyl-CoA. The enzyme catalyses 3-oxo-(6Z,9Z,12Z,15Z,18Z,21Z)-tetracosahexaenoyl-CoA + CoA = (4Z,7Z,10Z,13Z,16Z,19Z)-docosahexaenoyl-CoA + acetyl-CoA. Its pathway is lipid metabolism; peroxisomal fatty acid beta-oxidation. Its function is as follows. Responsible for the thiolytic cleavage of straight chain 3-keto fatty acyl-CoAs (3-oxoacyl-CoAs). Plays an important role in fatty acid peroxisomal beta-oxidation. Catalyzes the cleavage of short, medium, long, and very long straight chain 3-oxoacyl-CoAs. Medium chain straight 3-oxoacyl-CoAs are preferred substrates. The chain is 3-ketoacyl-CoA thiolase B, peroxisomal from Rattus norvegicus (Rat).